The following is a 203-amino-acid chain: METLTSRQRTVLEFITAHVDRHGYPPTMREIARHLNVNGTLGVAKHLEALARKGYLQREPGNSRGITLTGQTRHTPTVSLPVIGVVRAGVPQIATEEIEEHISIDQSLVKGGAFFLRVKGDSMINAAIIEGDLALVRPQQTAENRDIVVAMIDGEATLKRFYQGADHIRLQPENPNMAPIIVRSGVQEAWIIGKVVGIYRRMD.

Positions 28–48 (MREIARHLNVNGTLGVAKHLE) form a DNA-binding region, H-T-H motif. Catalysis depends on for autocatalytic cleavage activity residues serine 122 and lysine 159.

The protein belongs to the peptidase S24 family. In terms of assembly, homodimer.

The catalysed reaction is Hydrolysis of Ala-|-Gly bond in repressor LexA.. Represses a number of genes involved in the response to DNA damage (SOS response), including recA and lexA. In the presence of single-stranded DNA, RecA interacts with LexA causing an autocatalytic cleavage which disrupts the DNA-binding part of LexA, leading to derepression of the SOS regulon and eventually DNA repair. This chain is LexA repressor 2, found in Geobacter sulfurreducens (strain ATCC 51573 / DSM 12127 / PCA).